A 255-amino-acid polypeptide reads, in one-letter code: 1-acyl-sn-glycerol-3-phosphate acyltransferase (255 aa).

Positions 78 to 83 match the HXXXXD motif motif; the sequence is HVSWLD.

It belongs to the 1-acyl-sn-glycerol-3-phosphate acyltransferase family.

The protein resides in the cell inner membrane. The enzyme catalyses a 1-acyl-sn-glycero-3-phosphate + an acyl-CoA = a 1,2-diacyl-sn-glycero-3-phosphate + CoA. The protein operates within phospholipid metabolism; CDP-diacylglycerol biosynthesis; CDP-diacylglycerol from sn-glycerol 3-phosphate: step 2/3. Converts lysophosphatidic acid (LPA) into phosphatidic acid by incorporating acyl moiety at the 2 position. The protein is 1-acyl-sn-glycerol-3-phosphate acyltransferase (plsC) of Neisseria meningitidis serogroup B (strain ATCC BAA-335 / MC58).